The sequence spans 143 residues: Spore coat protein P (143 aa).

The sHSP domain occupies 34–143 (FFDSEASTFV…VETVAFNKGL (110 aa)).

Belongs to the small heat shock protein (HSP20) family.

In Bacillus subtilis (strain 168), this protein is Spore coat protein P (cotP).